The chain runs to 289 residues: Protease HtpX homolog (289 aa).

Transmembrane regions (helical) follow at residues 11 to 31 and 36 to 54; these read AALF…IGAG and APIW…YGYW. H138 provides a ligand contact to Zn(2+). E139 is a catalytic residue. Position 142 (H142) interacts with Zn(2+). Helical transmembrane passes span 153-173 and 182-202; these read VAAA…FFGG and LAMI…QMAI. Position 207 (E207) interacts with Zn(2+).

Belongs to the peptidase M48B family. Requires Zn(2+) as cofactor.

It localises to the cell membrane. This Pseudarthrobacter chlorophenolicus (strain ATCC 700700 / DSM 12829 / CIP 107037 / JCM 12360 / KCTC 9906 / NCIMB 13794 / A6) (Arthrobacter chlorophenolicus) protein is Protease HtpX homolog.